We begin with the raw amino-acid sequence, 344 residues long: Probable nicotinate-nucleotide adenylyltransferase/Ap4A hydrolase (344 aa).

The segment at 1-182 (MIFGGAFDPL…YIHQHNIYLK (182 aa)) is naMN adenylyltransferase. The segment at 191-344 (EPRMQHCLRV…LKYVRSLQKN (154 aa)) is ap4A hydrolase. The HD domain maps to 193-304 (RMQHCLRVGQ…IYLADKLEPM (112 aa)). An ADP-binding site is contributed by histidine 196. Fe cation-binding residues include histidine 196, histidine 225, and aspartate 226. ADP is bound by residues 226–229 (DLAK), histidine 255, 281–282 (HT), aspartate 299, and arginine 305. Aspartate 299 is a binding site for Fe cation.

It in the N-terminal section; belongs to the NadD family. The protein in the C-terminal section; belongs to the Ap4A hydrolase YqeK family.

It carries out the reaction nicotinate beta-D-ribonucleotide + ATP + H(+) = deamido-NAD(+) + diphosphate. It catalyses the reaction P(1),P(4)-bis(5'-adenosyl) tetraphosphate + H2O = 2 ADP + 2 H(+). It participates in cofactor biosynthesis; NAD(+) biosynthesis; deamido-NAD(+) from nicotinate D-ribonucleotide: step 1/1. Functionally, catalyzes the reversible adenylation of nicotinate mononucleotide (NaMN) to nicotinic acid adenine dinucleotide (NaAD). Hydrolyzes diadenosine 5',5'''-P1,P4-tetraphosphate (Ap4A) to yield ADP. The protein is Probable nicotinate-nucleotide adenylyltransferase/Ap4A hydrolase of Mycoplasma pneumoniae (strain ATCC 29342 / M129 / Subtype 1) (Mycoplasmoides pneumoniae).